The following is a 711-amino-acid chain: DNA topoisomerase 3 (711 aa).

The Toprim domain maps to 2-135 (KSLILAEKPS…LRRLWISSVT (134 aa)). Mg(2+)-binding residues include E8 and D104. In terms of domain architecture, Topo IA-type catalytic spans 152–580 (YNDLYYAALA…EMKDFTKDVV (429 aa)). The segment at 186 to 191 (SLGRVQ) is interaction with DNA. The O-(5'-phospho-DNA)-tyrosine intermediate role is filled by Y305. Residues 691–711 (MNKNEGLDNNPFKDALKNLNL) form a disordered region.

It belongs to the type IA topoisomerase family. It depends on Mg(2+) as a cofactor.

It catalyses the reaction ATP-independent breakage of single-stranded DNA, followed by passage and rejoining.. Releases the supercoiling and torsional tension of DNA, which is introduced during the DNA replication and transcription, by transiently cleaving and rejoining one strand of the DNA duplex. Introduces a single-strand break via transesterification at a target site in duplex DNA. The scissile phosphodiester is attacked by the catalytic tyrosine of the enzyme, resulting in the formation of a DNA-(5'-phosphotyrosyl)-enzyme intermediate and the expulsion of a 3'-OH DNA strand. The free DNA strand then undergoes passage around the unbroken strand, thus removing DNA supercoils. Finally, in the religation step, the DNA 3'-OH attacks the covalent intermediate to expel the active-site tyrosine and restore the DNA phosphodiester backbone. The chain is DNA topoisomerase 3 from Staphylococcus aureus (strain MRSA252).